Here is a 20-residue protein sequence, read N- to C-terminus: Maximin-Ht (20 aa).

Belongs to the bombinin family. As to expression, expressed by the skin glands.

The protein resides in the secreted. Its function is as follows. Has antimicrobial activity. The polypeptide is Maximin-Ht (Bombina maxima (Giant fire-bellied toad)).